A 243-amino-acid polypeptide reads, in one-letter code: Protein canopy homolog 3 (243 aa).

The first 15 residues, 1–15, serve as a signal peptide directing secretion; sequence MWFLFLLLPLWAGCA. The 210-residue stretch at 27–236 folds into the Saposin B-type domain; it reads SKCEVCKYVA…KEEKKQMDQP (210 aa). 3 disulfide bridges follow: cysteine 29-cysteine 188, cysteine 32-cysteine 176, and cysteine 86-cysteine 148. Residues 136 to 160 adopt a coiled-coil conformation; that stretch reads ETSAEVADMKKQCDVMMENYEEVIE. Positions 186–243 are disordered; that stretch reads QSCLSEQGDSRKGDTGPSTGTKKQKKQGEKKNKSKKQNSGSKEEKKQMDQPMAAKEEL. Residues 226-243 show a composition bias toward basic and acidic residues; it reads SKEEKKQMDQPMAAKEEL.

Belongs to the canopy family.

It localises to the endoplasmic reticulum. In terms of biological role, toll-like receptor (TLR)-specific co-chaperone for HSP90B1. Required for proper TLR folding and hence controls TLR exit from the endoplasmic reticulum. Consequently, required for immune responses. The polypeptide is Protein canopy homolog 3 (cnpy3) (Xenopus laevis (African clawed frog)).